The sequence spans 639 residues: Cystathionine gamma-synthase (639 aa).

Residue Lys-443 is modified to N6-(pyridoxal phosphate)lysine.

The protein belongs to the trans-sulfuration enzymes family. MET7 subfamily. Pyridoxal 5'-phosphate is required as a cofactor.

Its subcellular location is the cytoplasm. It localises to the nucleus. The catalysed reaction is O-succinyl-L-homoserine + L-cysteine = L,L-cystathionine + succinate + H(+). Its pathway is amino-acid biosynthesis; L-methionine biosynthesis via de novo pathway; L-cystathionine from O-succinyl-L-homoserine: step 1/1. In terms of biological role, catalyzes the formation of L-cystathionine from O-succinyl-L-homoserine (OSHS) and L-cysteine, via a gamma-replacement reaction. In the absence of thiol, catalyzes gamma-elimination to form 2-oxobutanoate, succinate and ammonia. This is Cystathionine gamma-synthase from Saccharomyces cerevisiae (strain ATCC 204508 / S288c) (Baker's yeast).